The following is a 143-amino-acid chain: SsrA-binding protein (143 aa).

It belongs to the SmpB family.

Its subcellular location is the cytoplasm. In terms of biological role, required for rescue of stalled ribosomes mediated by trans-translation. Binds to transfer-messenger RNA (tmRNA), required for stable association of tmRNA with ribosomes. tmRNA and SmpB together mimic tRNA shape, replacing the anticodon stem-loop with SmpB. tmRNA is encoded by the ssrA gene; the 2 termini fold to resemble tRNA(Ala) and it encodes a 'tag peptide', a short internal open reading frame. During trans-translation Ala-aminoacylated tmRNA acts like a tRNA, entering the A-site of stalled ribosomes, displacing the stalled mRNA. The ribosome then switches to translate the ORF on the tmRNA; the nascent peptide is terminated with the 'tag peptide' encoded by the tmRNA and targeted for degradation. The ribosome is freed to recommence translation, which seems to be the essential function of trans-translation. The polypeptide is SsrA-binding protein (Deinococcus geothermalis (strain DSM 11300 / CIP 105573 / AG-3a)).